Reading from the N-terminus, the 647-residue chain is MKYPAFSINSDTVHLTDNPLDDYQRLYLVSVLDRDSPPASFSAGLNIRKVNYKSSIAAQFTHPNFIISARDAGNGEEAAAQNVLNCFEYQFPNLQTIQSLVHEQTLLSQLASSATPHSALHLHDKNILMGKIILPSRSNKTPVSASPTKQEKKALSTASRENATSSLTKNQQFKLTKMDHNLINDKLINPNNCVIWSHDSGYVFMTGIWRLYQDVMKGLINLPRGDSVSTSQQQFFCKAEFEKILSFCFYNHSSFTSEESSSVLLSSSTSSPPKRRTSTGSTFLDANASSSSTSSTQANNYIDFHWNNIKPELRDLICQSYKDFLINELGPDQIDLPNLNPANFTKRIRGGYIKIQGTWLPMEISRLLCLRFCFPIRYFLVPIFGPDFPKDCESWYLAHQNVTFASSTTGAGAATAATAAANTSTNFTSTAVARPRQKPRPRPRQRSTSMSHSKAQKLVIEDALPSFDSFVENLGLSSNDKNFIKKNSKRQKSSTYTSQTSSPIGPRDPTVQILSNLASFYNTHGHRYSYPGNIYIPQQRYSLPPPNQLSSPQRQLNYTYDHIHPVPSQYQSPRHYNVPSSPIAPAPPTFPQPYGDDHYHFLKYASEVYKQQNQRPAHNTNTNMDTSFSPRANNSLNNFKFKTNSKQ.

Polar residues-rich tracts occupy residues 138-148 (SNKTPVSASPT) and 156-170 (STASRENATSSLTKN). Disordered stretches follow at residues 138–170 (SNKTPVSASPTKQEKKALSTASRENATSSLTKN) and 264–295 (LLSSSTSSPPKRRTSTGSTFLDANASSSSTSS). Residues 264 to 282 (LLSSSTSSPPKRRTSTGST) are compositionally biased toward low complexity. The HTH APSES-type domain occupies 282 to 395 (TFLDANASSS…PDFPKDCESW (114 aa)). Positions 318–339 (CQSYKDFLINELGPDQIDLPNL) form a DNA-binding region, H-T-H motif. Residues 425-434 (TNFTSTAVAR) are compositionally biased toward low complexity. 3 disordered regions span residues 425–455 (TNFTSTAVARPRQKPRPRPRQRSTSMSHSKA), 485–508 (KKNSKRQKSSTYTSQTSSPIGPRD), and 612–647 (QNQRPAHNTNTNMDTSFSPRANNSLNNFKFKTNSKQ). Basic residues predominate over residues 435-445 (PRQKPRPRPRQ). The segment covering 493 to 502 (SSTYTSQTSS) has biased composition (low complexity).

The protein resides in the nucleus. In terms of biological role, transcriptional repressor which binds to the consensus sequence 5'-GCCTCGA[G/A]G[C/A]-3'. Represses CLN1 transcription. This Saccharomyces cerevisiae (strain ATCC 204508 / S288c) (Baker's yeast) protein is Transcriptional repressor XBP1 (XBP1).